Here is a 201-residue protein sequence, read N- to C-terminus: Putative lipoprotein Hmuk_2215 (201 aa).

The signal sequence occupies residues 1–22; sequence MCPRPRRAVLLGLGVAMSAIAG. Cysteine 23 carries the N-acetylcysteine modification. Cysteine 23 carries S-archaeol cysteine lipidation. Disordered regions lie at residues 25–78 and 182–201; these read ETAP…ETSE and ATRA…GDCP. The span at 69–78 shows a compositional bias: basic and acidic residues; that stretch reads TRADETETSE.

It localises to the cell membrane. This is Putative lipoprotein Hmuk_2215 from Halomicrobium mukohataei (strain ATCC 700874 / DSM 12286 / JCM 9738 / NCIMB 13541) (Haloarcula mukohataei).